We begin with the raw amino-acid sequence, 212 residues long: Glycerol-3-phosphate acyltransferase (212 aa).

4 consecutive transmembrane segments (helical) span residues 3-23 (ILLAALVAYLIGSVSFAVVVS), 78-98 (DVAVAWVAIAVFLGHLYPVFF), 115-135 (AVHPVLGLATALTWLIVAFFF), and 155-177 (FLFGTGHNPVAWAVLAMSVLLVW).

The protein belongs to the PlsY family. As to quaternary structure, probably interacts with PlsX.

The protein resides in the cell inner membrane. It carries out the reaction an acyl phosphate + sn-glycerol 3-phosphate = a 1-acyl-sn-glycero-3-phosphate + phosphate. It functions in the pathway lipid metabolism; phospholipid metabolism. Its function is as follows. Catalyzes the transfer of an acyl group from acyl-phosphate (acyl-PO(4)) to glycerol-3-phosphate (G3P) to form lysophosphatidic acid (LPA). This enzyme utilizes acyl-phosphate as fatty acyl donor, but not acyl-CoA or acyl-ACP. In Burkholderia lata (strain ATCC 17760 / DSM 23089 / LMG 22485 / NCIMB 9086 / R18194 / 383), this protein is Glycerol-3-phosphate acyltransferase.